A 448-amino-acid chain; its full sequence is Homogentisate 1,2-dioxygenase (448 aa).

His303 (proton acceptor) is an active-site residue. Residues His346 and Glu352 each contribute to the Fe cation site. Homogentisate is bound by residues Tyr361 and His382. His382 contributes to the Fe cation binding site.

The protein belongs to the homogentisate dioxygenase family. As to quaternary structure, hexamer; dimer of trimers. Fe cation is required as a cofactor.

The enzyme catalyses homogentisate + O2 = 4-maleylacetoacetate + H(+). The protein operates within amino-acid degradation; L-phenylalanine degradation; acetoacetate and fumarate from L-phenylalanine: step 4/6. Involved in the catabolism of homogentisate (2,5-dihydroxyphenylacetate or 2,5-OH-PhAc), a central intermediate in the degradation of phenylalanine and tyrosine. Catalyzes the oxidative ring cleavage of the aromatic ring of homogentisate to yield maleylacetoacetate. The polypeptide is Homogentisate 1,2-dioxygenase (Rhodopseudomonas palustris (strain ATCC BAA-98 / CGA009)).